A 204-amino-acid chain; its full sequence is Sperm acrosome developmental regulator (204 aa).

A Phosphoserine modification is found at S65. Residues 172–184 (RRQERRRRHHLRA) show a composition bias toward basic residues. The segment at 172–204 (RRQERRRRHHLRAHMGPQPDPAQGLKQDARSPL) is disordered.

The protein localises to the cytoplasmic vesicle. Its subcellular location is the secretory vesicle. The protein resides in the acrosome. May play an important role in acrosome formation and nucleus shaping during spermiogenesis. In Bos taurus (Bovine), this protein is Sperm acrosome developmental regulator (SPACDR).